We begin with the raw amino-acid sequence, 431 residues long: Histidine--tRNA ligase (431 aa).

This sequence belongs to the class-II aminoacyl-tRNA synthetase family. Homodimer.

It localises to the cytoplasm. It catalyses the reaction tRNA(His) + L-histidine + ATP = L-histidyl-tRNA(His) + AMP + diphosphate + H(+). The chain is Histidine--tRNA ligase from Limosilactobacillus fermentum (strain NBRC 3956 / LMG 18251) (Lactobacillus fermentum).